Here is a 67-residue protein sequence, read N- to C-terminus: DNA-directed RNA polymerase subunit omega (67 aa).

Belongs to the RNA polymerase subunit omega family. As to quaternary structure, the RNAP catalytic core consists of 2 alpha, 1 beta, 1 beta' and 1 omega subunit. When a sigma factor is associated with the core the holoenzyme is formed, which can initiate transcription.

The enzyme catalyses RNA(n) + a ribonucleoside 5'-triphosphate = RNA(n+1) + diphosphate. Its function is as follows. Promotes RNA polymerase assembly. Latches the N- and C-terminal regions of the beta' subunit thereby facilitating its interaction with the beta and alpha subunits. This Treponema pallidum (strain Nichols) protein is DNA-directed RNA polymerase subunit omega (rpoZ).